A 780-amino-acid polypeptide reads, in one-letter code: Copper-exporting P-type ATPase (780 aa).

The region spanning 2–67 is the HMA domain; that stretch reads QRIQLNITGM…AVRRAALCTD (66 aa). Residues Cys-13 and Cys-16 each coordinate Cu(+). 6 consecutive transmembrane segments (helical) span residues 89–109, 114–134, 153–173, 185–205, 348–368, and 374–394; these read LAVAAALFVPLAHLSVMFAVL, FPGWEWMLTALAIPVVTWAAW, TLISTGITAATIWSLYTVFGH, ALLGSDAIYFEVAAGITVFVL, VFVPCVFAVAALTAVGWLIAG, and VFSAAIAVLVIACPCALGLAT. Residue Asp-430 is the 4-aspartylphosphate intermediate of the active site. Helical transmembrane passes span 680–698 and 704–722; these read FNMVWAFGYNIAAIPIAAA and LVAGAAMAFSSFFVVSNSL.

It belongs to the cation transport ATPase (P-type) (TC 3.A.3) family. Type IB subfamily.

It is found in the cell membrane. The catalysed reaction is Cu(+)(in) + ATP + H2O = Cu(+)(out) + ADP + phosphate + H(+). Its function is as follows. Involved in copper export. The protein is Copper-exporting P-type ATPase (ctpA) of Mycobacterium leprae (strain TN).